A 212-amino-acid polypeptide reads, in one-letter code: Lipid A acyltransferase PagP (212 aa).

The signal sequence occupies residues 1-26; it reads MSSTYFHSSLLAATLFSVTLTAPAFA. Over residues 29-44 the composition is skewed to low complexity; it reads NTQNTPQTITTKKPQP. Residues 29 to 50 are disordered; it reads NTQNTPQTITTKKPQPAENTFS. Residues His-84, Asp-127, and Ser-128 contribute to the active site.

The protein belongs to the lipid A palmitoyltransferase family. As to quaternary structure, homodimer.

It is found in the cell outer membrane. It carries out the reaction a lipid A + a 1,2-diacyl-sn-glycero-3-phosphocholine = a hepta-acyl lipid A + a 2-acyl-sn-glycero-3-phosphocholine. The enzyme catalyses a lipid IVA + a 1,2-diacyl-sn-glycero-3-phosphocholine = a lipid IVB + a 2-acyl-sn-glycero-3-phosphocholine. The catalysed reaction is a lipid IIA + a 1,2-diacyl-sn-glycero-3-phosphocholine = a lipid IIB + a 2-acyl-sn-glycero-3-phosphocholine. Functionally, transfers a fatty acid residue from the sn-1 position of a phospholipid to the N-linked hydroxyfatty acid chain on the proximal unit of lipid A or its precursors. The protein is Lipid A acyltransferase PagP of Proteus mirabilis (strain HI4320).